The following is a 114-amino-acid chain: Holo-[acyl-carrier-protein] synthase (114 aa).

Residues D8 and E58 each contribute to the Mg(2+) site.

The protein belongs to the P-Pant transferase superfamily. AcpS family. Mg(2+) serves as cofactor.

Its subcellular location is the cytoplasm. It catalyses the reaction apo-[ACP] + CoA = holo-[ACP] + adenosine 3',5'-bisphosphate + H(+). Functionally, transfers the 4'-phosphopantetheine moiety from coenzyme A to a Ser of acyl-carrier-protein. This is Holo-[acyl-carrier-protein] synthase from Mycoplasma genitalium (strain ATCC 33530 / DSM 19775 / NCTC 10195 / G37) (Mycoplasmoides genitalium).